A 203-amino-acid chain; its full sequence is Methyltransferase-like 26 (203 aa).

The protein belongs to the UPF0585 family.

The chain is Methyltransferase-like 26 from Xenopus tropicalis (Western clawed frog).